Here is a 91-residue protein sequence, read N- to C-terminus: UPF0298 protein spyM18_0447 (91 aa).

Belongs to the UPF0298 family.

Its subcellular location is the cytoplasm. The chain is UPF0298 protein spyM18_0447 from Streptococcus pyogenes serotype M18 (strain MGAS8232).